A 314-amino-acid polypeptide reads, in one-letter code: Oxalate oxidoreductase subunit beta (314 aa).

Positions 24, 27, 52, and 225 each coordinate [4Fe-4S] cluster.

In terms of assembly, dimer of heterotrimer of one alpha, one beta and one delta subunit. [4Fe-4S] cluster is required as a cofactor.

It carries out the reaction oxidized 2[4Fe-4S]-[ferredoxin] + oxalate = reduced 2[4Fe-4S]-[ferredoxin] + 2 CO2. In terms of biological role, catalyzes the anaerobic oxidation of oxalate using a broad range of electron acceptors, including ferredoxin and the nickel-dependent carbon monoxide dehydrogenase. Does not require coenzyme A as cosubstrate. Enables anaerobic growth on oxalate which is used as energy source by the bacteria. The protein is Oxalate oxidoreductase subunit beta of Moorella thermoacetica (strain ATCC 39073 / JCM 9320).